Here is a 215-residue protein sequence, read N- to C-terminus: NADH-quinone oxidoreductase subunit C (215 aa).

This sequence belongs to the complex I 30 kDa subunit family. NDH-1 is composed of 14 different subunits. Subunits NuoB, C, D, E, F, and G constitute the peripheral sector of the complex.

It localises to the cell inner membrane. The catalysed reaction is a quinone + NADH + 5 H(+)(in) = a quinol + NAD(+) + 4 H(+)(out). Its function is as follows. NDH-1 shuttles electrons from NADH, via FMN and iron-sulfur (Fe-S) centers, to quinones in the respiratory chain. The immediate electron acceptor for the enzyme in this species is believed to be ubiquinone. Couples the redox reaction to proton translocation (for every two electrons transferred, four hydrogen ions are translocated across the cytoplasmic membrane), and thus conserves the redox energy in a proton gradient. This chain is NADH-quinone oxidoreductase subunit C, found in Dinoroseobacter shibae (strain DSM 16493 / NCIMB 14021 / DFL 12).